Reading from the N-terminus, the 168-residue chain is GPI-anchored protein LLG1 (168 aa).

The signal sequence occupies residues 1–23; sequence MELLSRALFFFLLLSVLSSFSSS. N-linked (GlcNAc...) asparagine glycosylation occurs at N57. N144 carries GPI-anchor amidated asparagine lipidation. Residues 145-168 constitute a propeptide, removed in mature form; the sequence is AATTSSSRLWLTVSAALLVFVKLF.

In terms of assembly, interacts with FER. Expressed in pollen, pollen tubes, sporophytic pistil tissues, in the early stages of female gametophyte development, and in unfertilized, mature ovules. Expressed in roots, lateral roots, shoots, cotyledons, petioles, developing leaves and anther filaments.

It is found in the cell membrane. Functionally, component of the FER-regulated Rho GTPase signaling complex. Acts as a chaperone and coreceptor for FER. Required for localization of FER to the plasma membrane. This is GPI-anchored protein LLG1 from Arabidopsis thaliana (Mouse-ear cress).